A 458-amino-acid polypeptide reads, in one-letter code: Exodeoxyribonuclease 7 large subunit (458 aa).

This sequence belongs to the XseA family. As to quaternary structure, heterooligomer composed of large and small subunits.

It is found in the cytoplasm. It carries out the reaction Exonucleolytic cleavage in either 5'- to 3'- or 3'- to 5'-direction to yield nucleoside 5'-phosphates.. Functionally, bidirectionally degrades single-stranded DNA into large acid-insoluble oligonucleotides, which are then degraded further into small acid-soluble oligonucleotides. This is Exodeoxyribonuclease 7 large subunit from Stutzerimonas stutzeri (strain A1501) (Pseudomonas stutzeri).